The following is a 218-amino-acid chain: Uracil-DNA glycosylase (218 aa).

The Proton acceptor role is filled by Asp59.

This sequence belongs to the uracil-DNA glycosylase (UDG) superfamily. UNG family.

Its subcellular location is the cytoplasm. It catalyses the reaction Hydrolyzes single-stranded DNA or mismatched double-stranded DNA and polynucleotides, releasing free uracil.. In terms of biological role, excises uracil residues from the DNA which can arise as a result of misincorporation of dUMP residues by DNA polymerase or due to deamination of cytosine. This chain is Uracil-DNA glycosylase, found in Staphylococcus aureus (strain MSSA476).